The following is a 160-amino-acid chain: Phosphopantetheine adenylyltransferase (160 aa).

Ser10 provides a ligand contact to substrate. ATP is bound by residues 10–11 and His18; that span reads SF. Residues Lys42, Leu74, and Arg88 each coordinate substrate. Residues 89-91, Glu99, and 124-130 each bind ATP; these read GLR and YSFLSSS.

The protein belongs to the bacterial CoaD family. Homohexamer. Requires Mg(2+) as cofactor.

It localises to the cytoplasm. It catalyses the reaction (R)-4'-phosphopantetheine + ATP + H(+) = 3'-dephospho-CoA + diphosphate. It participates in cofactor biosynthesis; coenzyme A biosynthesis; CoA from (R)-pantothenate: step 4/5. Its function is as follows. Reversibly transfers an adenylyl group from ATP to 4'-phosphopantetheine, yielding dephospho-CoA (dPCoA) and pyrophosphate. The protein is Phosphopantetheine adenylyltransferase of Bacillus pumilus (strain SAFR-032).